Reading from the N-terminus, the 398-residue chain is Cytochrome b (398 aa).

Transmembrane regions (helical) follow at residues 38–58 (FGSL…FLAM), 82–104 (WLLR…LHIF), 119–139 (VWCL…IGYV), and 185–205 (FFSL…LHLA). Residues histidine 88 and histidine 102 each coordinate heme b. Heme b-binding residues include histidine 189 and histidine 203. Histidine 208 is a binding site for a ubiquinone. A run of 4 helical transmembrane segments spans residues 231 to 251 (FYVK…IWIF), 295 to 315 (AGGV…PFFK), 327 to 347 (IYQG…WIGC), and 354 to 373 (FVTI…AITP).

Belongs to the cytochrome b family. The main subunits of complex b-c1 are: cytochrome b, cytochrome c1 and the Rieske protein. Heme b is required as a cofactor.

Its subcellular location is the mitochondrion inner membrane. In terms of biological role, component of the ubiquinol-cytochrome c reductase complex (complex III or cytochrome b-c1 complex) that is part of the mitochondrial respiratory chain. The b-c1 complex mediates electron transfer from ubiquinol to cytochrome c. Contributes to the generation of a proton gradient across the mitochondrial membrane that is then used for ATP synthesis. This chain is Cytochrome b (MT-CYB), found in Triticum aestivum (Wheat).